Reading from the N-terminus, the 64-residue chain is MDFCKIDVVVSFAHSFDNLINFINTIVPYSDIIELHQFLVQSSTTGNIFVKHYNMISPRNIFIY.

This is an uncharacterized protein from Bos taurus (Bovine).